Reading from the N-terminus, the 487-residue chain is 26S proteasome non-ATPase regulatory subunit 3 homolog B (487 aa).

A disordered region spans residues 1 to 21 (MTQDVEMKDNQTPTQSVVSAP). Positions 10 to 21 (NQTPTQSVVSAP) are enriched in polar residues. The 182-residue stretch at 239-420 (CRYLFYLGKI…GCMVSKETGD (182 aa)) folds into the PCI domain. The segment at 452 to 487 (PPNTHREKESEEKRREMKQQEEELAKYMAEEDDDDF) is disordered. The segment covering 455–480 (THREKESEEKRREMKQQEEELAKYMA) has biased composition (basic and acidic residues).

It belongs to the proteasome subunit S3 family. Component of the 19S regulatory particle (RP/PA700) lid subcomplex of the 26S proteasome. The 26S proteasome is composed of a core protease (CP), known as the 20S proteasome, capped at one or both ends by the 19S regulatory particle (RP/PA700). The RP/PA700 complex is composed of at least 17 different subunits in two subcomplexes, the base and the lid, which form the portions proximal and distal to the 20S proteolytic core, respectively. Interacts with UCH1 and UCH2. As to expression, preferentially expressed in flowers.

Acts as a regulatory subunit of the 26 proteasome which is involved in the ATP-dependent degradation of ubiquitinated proteins. This chain is 26S proteasome non-ATPase regulatory subunit 3 homolog B, found in Arabidopsis thaliana (Mouse-ear cress).